The following is a 306-amino-acid chain: Esterase tropF (306 aa).

Active-site charge relay system residues include serine 147, aspartate 248, and histidine 276.

Belongs to the LovG family.

It functions in the pathway secondary metabolite biosynthesis. In terms of biological role, esterase; part of the gene cluster that mediates the biosynthesis of the tropolone class of fungal maleic anhydrides. The pathway begins with the synthesis of 3-methylorcinaldehyde by the non-reducing polyketide synthase (PKS) tropA. 3-methylorcinaldehyde is the substrate for the FAD-dependent monooxygenase tropB to yield a dearomatized hydroxycyclohexadione. The 2-oxoglutarate-dependent dioxygenase tropC then performs the oxidative ring expansion to provide the first tropolone metabolite stipitaldehyde. Trop D converts stipitaldehyde into stipitacetal which is in turn converted to stipitalide by the short-chain dehydrogenase/reductase tropE. The next steps involve tropF, tropG, tropH, tropI and tropJ to form successive tropolone maleic anhydrides including stipitaldehydic, stipitatonic and stipitatic acids. The chain is Esterase tropF from Talaromyces stipitatus (strain ATCC 10500 / CBS 375.48 / QM 6759 / NRRL 1006) (Penicillium stipitatum).